We begin with the raw amino-acid sequence, 327 residues long: Plastid lipid-associated protein 1, chloroplastic (327 aa).

The transit peptide at methionine 1 to serine 84 directs the protein to the chloroplast. The segment at valine 56–glutamate 78 is disordered. A coiled-coil region spans residues valine 85 to leucine 107.

Belongs to the PAP/fibrillin family. As to expression, expressed in anthers, sepals seeds, fruit coats, and leaves. Very low in petals and pistils and not detected in roots.

Its subcellular location is the plastid. The protein localises to the chloroplast. In terms of biological role, may modulate the action of carotenoids. In Brassica campestris (Field mustard), this protein is Plastid lipid-associated protein 1, chloroplastic (PAP1).